An 870-amino-acid chain; its full sequence is DNA mismatch repair protein MutS (870 aa).

608–615 (GPNMAGKS) lines the ATP pocket.

This sequence belongs to the DNA mismatch repair MutS family.

This protein is involved in the repair of mismatches in DNA. It is possible that it carries out the mismatch recognition step. This protein has a weak ATPase activity. This is DNA mismatch repair protein MutS from Persephonella marina (strain DSM 14350 / EX-H1).